Consider the following 1183-residue polypeptide: Chromosome partition protein Smc (1183 aa).

32–39 lines the ATP pocket; the sequence is PNGSGKSN. Positions 162-483 form a coiled coil; the sequence is EEAAGIKKLQ…KLSQDIREFE (322 aa). The SMC hinge domain maps to 519 to 632; that stretch reads SGIDGVLISL…VENIDIATDI (114 aa). Residues 666–1019 adopt a coiled-coil conformation; it reads INQIFERKKE…VMDLIQEIDE (354 aa).

Belongs to the SMC family. In terms of assembly, homodimer.

It localises to the cytoplasm. Its function is as follows. Required for chromosome condensation and partitioning. The sequence is that of Chromosome partition protein Smc from Fusobacterium nucleatum subsp. nucleatum (strain ATCC 25586 / DSM 15643 / BCRC 10681 / CIP 101130 / JCM 8532 / KCTC 2640 / LMG 13131 / VPI 4355).